A 467-amino-acid chain; its full sequence is Probable glutamate decarboxylase gamma (467 aa).

Lys-278 carries the post-translational modification N6-(pyridoxal phosphate)lysine.

It belongs to the group II decarboxylase family. Pyridoxal 5'-phosphate is required as a cofactor.

The catalysed reaction is L-glutamate + H(+) = 4-aminobutanoate + CO2. In Listeria innocua serovar 6a (strain ATCC BAA-680 / CLIP 11262), this protein is Probable glutamate decarboxylase gamma.